The following is a 94-amino-acid chain: Integration host factor subunit beta (94 aa).

This sequence belongs to the bacterial histone-like protein family. Heterodimer of an alpha and a beta chain.

This protein is one of the two subunits of integration host factor, a specific DNA-binding protein that functions in genetic recombination as well as in transcriptional and translational control. The sequence is that of Integration host factor subunit beta from Haemophilus influenzae (strain PittGG).